The chain runs to 292 residues: uncharacterized protein (292 aa).

Active-site charge relay system residues include serine 44 and tyrosine 106. The active-site Proton donor is the tyrosine 132. Residue lysine 161 is the Schiff-base intermediate with substrate of the active site.

Belongs to the DapA family. Homotetramer.

It localises to the cytoplasm. This is an uncharacterized protein from Thermoplasma acidophilum (strain ATCC 25905 / DSM 1728 / JCM 9062 / NBRC 15155 / AMRC-C165).